The chain runs to 538 residues: Mitochondrial distribution and morphology protein 34 (538 aa).

Positions 1–224 constitute an SMP-LTD domain; it reads MSFRFDRSVF…LPTALFNMSQ (224 aa). Disordered stretches follow at residues 26–55 and 231–251; these read ALNPKSRRHVERADEAGNEDDSSGHQRKSG and DGSRSSAKHKKDTCDENNQPS.

This sequence belongs to the MDM34 family. As to quaternary structure, component of the ER-mitochondria encounter structure (ERMES) or MDM complex, composed of MMM1, MDM10, MDM12 and MDM34.

The protein resides in the mitochondrion outer membrane. Component of the ERMES/MDM complex, which serves as a molecular tether to connect the endoplasmic reticulum (ER) and mitochondria. Components of this complex are involved in the control of mitochondrial shape and protein biogenesis, and function in nonvesicular lipid trafficking between the ER and mitochondria. MDM34 is required for the interaction of the ER-resident membrane protein MMM1 and the outer mitochondrial membrane-resident beta-barrel protein MDM10. This Candida glabrata (strain ATCC 2001 / BCRC 20586 / JCM 3761 / NBRC 0622 / NRRL Y-65 / CBS 138) (Yeast) protein is Mitochondrial distribution and morphology protein 34.